Here is a 141-residue protein sequence, read N- to C-terminus: Transcription antitermination protein NusB (141 aa).

It belongs to the NusB family.

In terms of biological role, involved in transcription antitermination. Required for transcription of ribosomal RNA (rRNA) genes. Binds specifically to the boxA antiterminator sequence of the ribosomal RNA (rrn) operons. The protein is Transcription antitermination protein NusB of Neisseria gonorrhoeae (strain ATCC 700825 / FA 1090).